Here is a 259-residue protein sequence, read N- to C-terminus: MKKLALLGALALSVLSLPTFAADKPVRIGIEAAYPPFSLKTPDGQLAGFDVDIGNALCEEMKVQCKWVEQEFDGLIPALKVRKIDAILSSMTITDERKRSVDFTNKYYNTPARFVMKEGASLNDPKADLKGKKAGVLRGSTADRYASAELTPAGVEVVRYNSQQEANMDLVAGRLDAVVADSVNLEDGFLKTDAGKGYAFVGPQLTDAKYFGEGVGIAVRKGDSELAGKFNAAIDALRANGKYKQIQDKYFSFDVYGSN.

The N-terminal stretch at 1 to 21 (MKKLALLGALALSVLSLPTFA) is a signal peptide.

Belongs to the bacterial solute-binding protein 3 family.

The protein resides in the periplasm. Binds L-arginine with high affinity. Shows no measurable affinity for L-ornithine. This chain is L-arginine-binding protein, found in Pseudomonas aeruginosa (strain ATCC 15692 / DSM 22644 / CIP 104116 / JCM 14847 / LMG 12228 / 1C / PRS 101 / PAO1).